Here is a 152-residue protein sequence, read N- to C-terminus: Protein-export protein SecB (152 aa).

This sequence belongs to the SecB family. Homotetramer, a dimer of dimers. One homotetramer interacts with 1 SecA dimer.

The protein localises to the cytoplasm. Its function is as follows. One of the proteins required for the normal export of preproteins out of the cell cytoplasm. It is a molecular chaperone that binds to a subset of precursor proteins, maintaining them in a translocation-competent state. It also specifically binds to its receptor SecA. This chain is Protein-export protein SecB, found in Rickettsia rickettsii (strain Iowa).